The sequence spans 70 residues: MRVLFFVFGVLSLMSTVPPTRSFTSNDECPSEYYHCRLKCNADEHAIRYCADFSICCKLKIIQIDGQKKW.

The first 22 residues, 1-22, serve as a signal peptide directing secretion; the sequence is MRVLFFVFGVLSLMSTVPPTRS. 3 disulfide bridges follow: C29/C56, C36/C50, and C40/C57.

The protein belongs to the beta-defensin family.

Its subcellular location is the secreted. Its function is as follows. Has antibacterial activity. This chain is Beta-defensin 131B, found in Homo sapiens (Human).